The following is a 416-amino-acid chain: D-amino acid dehydrogenase (416 aa).

3–17 (VTILGAGVIGVTTAY) serves as a coordination point for FAD.

The protein belongs to the DadA oxidoreductase family. Requires FAD as cofactor.

The catalysed reaction is a D-alpha-amino acid + A + H2O = a 2-oxocarboxylate + AH2 + NH4(+). Its pathway is amino-acid degradation; D-alanine degradation; NH(3) and pyruvate from D-alanine: step 1/1. Functionally, oxidative deamination of D-amino acids. The sequence is that of D-amino acid dehydrogenase from Rhizobium rhizogenes (strain K84 / ATCC BAA-868) (Agrobacterium radiobacter).